The following is a 1026-amino-acid chain: Beta-galactosidase (1026 aa).

N104 and D203 together coordinate substrate. D203 contacts Na(+). E418, H420, and E463 together coordinate Mg(2+). Substrate is bound by residues E463 and 539-542 (EYAH). E463 functions as the Proton donor in the catalytic mechanism. The active-site Nucleophile is E539. N599 provides a ligand contact to Mg(2+). Na(+) is bound by residues F603 and N606. N606 and W1002 together coordinate substrate.

It belongs to the glycosyl hydrolase 2 family. Homotetramer. It depends on Mg(2+) as a cofactor. The cofactor is Na(+).

It catalyses the reaction Hydrolysis of terminal non-reducing beta-D-galactose residues in beta-D-galactosides.. This chain is Beta-galactosidase, found in Erwinia tasmaniensis (strain DSM 17950 / CFBP 7177 / CIP 109463 / NCPPB 4357 / Et1/99).